The chain runs to 72 residues: UPF0270 protein plu0398 (72 aa).

The protein belongs to the UPF0270 family.

In Photorhabdus laumondii subsp. laumondii (strain DSM 15139 / CIP 105565 / TT01) (Photorhabdus luminescens subsp. laumondii), this protein is UPF0270 protein plu0398.